A 92-amino-acid chain; its full sequence is Small ribosomal subunit protein uS19c (92 aa).

Belongs to the universal ribosomal protein uS19 family.

It is found in the plastid. It localises to the chloroplast. Its function is as follows. Protein S19 forms a complex with S13 that binds strongly to the 16S ribosomal RNA. The polypeptide is Small ribosomal subunit protein uS19c (rps19) (Trieres chinensis (Marine centric diatom)).